A 528-amino-acid chain; its full sequence is Peptide chain release factor 3 (528 aa).

A tr-type G domain is found at 10 to 278 (DKRRTFGIIS…TFVDLAPAPQ (269 aa)). GTP is bound by residues 19–26 (SHPDAGKT), 87–91 (DTPGH), and 141–144 (NKLD).

It belongs to the TRAFAC class translation factor GTPase superfamily. Classic translation factor GTPase family. PrfC subfamily.

The protein localises to the cytoplasm. Increases the formation of ribosomal termination complexes and stimulates activities of RF-1 and RF-2. It binds guanine nucleotides and has strong preference for UGA stop codons. It may interact directly with the ribosome. The stimulation of RF-1 and RF-2 is significantly reduced by GTP and GDP, but not by GMP. The sequence is that of Peptide chain release factor 3 from Oleidesulfovibrio alaskensis (strain ATCC BAA-1058 / DSM 17464 / G20) (Desulfovibrio alaskensis).